Consider the following 354-residue polypeptide: Methylthioribose-1-phosphate isomerase (354 aa).

Substrate is bound by residues 58–60, R101, and Q204; that span reads RGA. The Proton donor role is filled by D245. 255 to 256 is a binding site for substrate; sequence NK.

The protein belongs to the eIF-2B alpha/beta/delta subunits family. MtnA subfamily.

It catalyses the reaction 5-(methylsulfanyl)-alpha-D-ribose 1-phosphate = 5-(methylsulfanyl)-D-ribulose 1-phosphate. It participates in amino-acid biosynthesis; L-methionine biosynthesis via salvage pathway; L-methionine from S-methyl-5-thio-alpha-D-ribose 1-phosphate: step 1/6. Functionally, catalyzes the interconversion of methylthioribose-1-phosphate (MTR-1-P) into methylthioribulose-1-phosphate (MTRu-1-P). In Xanthomonas euvesicatoria pv. vesicatoria (strain 85-10) (Xanthomonas campestris pv. vesicatoria), this protein is Methylthioribose-1-phosphate isomerase.